Consider the following 177-residue polypeptide: Bifunctional protein PyrR (177 aa).

The PRPP-binding motif lies at 99-111 (LVLIDDVIYKGRT).

The protein belongs to the purine/pyrimidine phosphoribosyltransferase family. PyrR subfamily.

The enzyme catalyses UMP + diphosphate = 5-phospho-alpha-D-ribose 1-diphosphate + uracil. Functionally, regulates the transcription of the pyrimidine nucleotide (pyr) operon in response to exogenous pyrimidines. In terms of biological role, also displays a weak uracil phosphoribosyltransferase activity which is not physiologically significant. The protein is Bifunctional protein PyrR of Picosynechococcus sp. (strain ATCC 27264 / PCC 7002 / PR-6) (Agmenellum quadruplicatum).